A 106-amino-acid polypeptide reads, in one-letter code: HIG1 domain family member 2B (106 aa).

At methionine 1–asparagine 46 the chain is on the cytoplasmic side. In terms of domain architecture, HIG1 spans isoleucine 20 to proline 106. Residues proline 47–phenylalanine 67 form a helical membrane-spanning segment. Over histidine 68–threonine 81 the chain is Extracellular. The helical transmembrane segment at glutamine 82–methionine 102 threads the bilayer. The Cytoplasmic portion of the chain corresponds to lysine 103 to proline 106.

It is found in the membrane. The chain is HIG1 domain family member 2B (HIGD2B) from Homo sapiens (Human).